A 276-amino-acid chain; its full sequence is NADPH-dependent 7-cyano-7-deazaguanine reductase (276 aa).

83 to 85 (IES) is a binding site for substrate. 85–86 (SK) contributes to the NADPH binding site. Cysteine 184 acts as the Thioimide intermediate in catalysis. Aspartate 191 functions as the Proton donor in the catalytic mechanism. 223–224 (HE) serves as a coordination point for substrate. An NADPH-binding site is contributed by 252–253 (RG).

The protein belongs to the GTP cyclohydrolase I family. QueF type 2 subfamily. As to quaternary structure, homodimer.

Its subcellular location is the cytoplasm. It carries out the reaction 7-aminomethyl-7-carbaguanine + 2 NADP(+) = 7-cyano-7-deazaguanine + 2 NADPH + 3 H(+). The protein operates within tRNA modification; tRNA-queuosine biosynthesis. Functionally, catalyzes the NADPH-dependent reduction of 7-cyano-7-deazaguanine (preQ0) to 7-aminomethyl-7-deazaguanine (preQ1). This Pseudomonas syringae pv. syringae (strain B728a) protein is NADPH-dependent 7-cyano-7-deazaguanine reductase.